Here is a 408-residue protein sequence, read N- to C-terminus: LL-diaminopimelate aminotransferase (408 aa).

Residues Y15 and G42 each contribute to the substrate site. Residues Y72, 108-109 (SK), Y132, N187, Y218, and 246-248 (SFS) contribute to the pyridoxal 5'-phosphate site. 3 residues coordinate substrate: K109, Y132, and N187. K249 carries the N6-(pyridoxal phosphate)lysine modification. The pyridoxal 5'-phosphate site is built by R257 and N292. The substrate site is built by N292 and R388.

Belongs to the class-I pyridoxal-phosphate-dependent aminotransferase family. LL-diaminopimelate aminotransferase subfamily. Homodimer. Requires pyridoxal 5'-phosphate as cofactor.

The catalysed reaction is (2S,6S)-2,6-diaminopimelate + 2-oxoglutarate = (S)-2,3,4,5-tetrahydrodipicolinate + L-glutamate + H2O + H(+). It functions in the pathway amino-acid biosynthesis; L-lysine biosynthesis via DAP pathway; LL-2,6-diaminopimelate from (S)-tetrahydrodipicolinate (aminotransferase route): step 1/1. In terms of biological role, involved in the synthesis of meso-diaminopimelate (m-DAP or DL-DAP), required for both lysine and peptidoglycan biosynthesis. Catalyzes the direct conversion of tetrahydrodipicolinate to LL-diaminopimelate. This is LL-diaminopimelate aminotransferase from Synechococcus sp. (strain CC9311).